Reading from the N-terminus, the 450-residue chain is Folate synthesis bifunctional protein (450 aa).

The tract at residues 1 to 166 (MTSWNFVCLS…TFAELAAIYP (166 aa)) is HPPK. Residues 180–441 (TQIMGIVNIT…QVEGNRRALA (262 aa)) form the Pterin-binding domain. A DHPS region spans residues 182-450 (IMGIVNITDN…AAAAWAGMFV (269 aa)). Position 187 (N187) interacts with Mg(2+). Residues T227, D267, N287, D358, K395, and 429–431 (RVH) each bind (7,8-dihydropterin-6-yl)methyl diphosphate.

It in the C-terminal section; belongs to the DHPS family. This sequence in the N-terminal section; belongs to the HPPK family. Mg(2+) is required as a cofactor.

The enzyme catalyses 6-hydroxymethyl-7,8-dihydropterin + ATP = (7,8-dihydropterin-6-yl)methyl diphosphate + AMP + H(+). It catalyses the reaction (7,8-dihydropterin-6-yl)methyl diphosphate + 4-aminobenzoate = 7,8-dihydropteroate + diphosphate. It participates in cofactor biosynthesis; tetrahydrofolate biosynthesis; 2-amino-4-hydroxy-6-hydroxymethyl-7,8-dihydropteridine diphosphate from 7,8-dihydroneopterin triphosphate: step 4/4. The protein operates within cofactor biosynthesis; tetrahydrofolate biosynthesis; 7,8-dihydrofolate from 2-amino-4-hydroxy-6-hydroxymethyl-7,8-dihydropteridine diphosphate and 4-aminobenzoate: step 1/2. This is Folate synthesis bifunctional protein (folKP) from Chlamydia trachomatis serovar D (strain ATCC VR-885 / DSM 19411 / UW-3/Cx).